The following is a 420-amino-acid chain: Pyrin and HIN domain-containing protein 1 (420 aa).

The Pyrin domain maps to 1-87 (MVNEYKRIVL…ANKLKNEKAK (87 aa)). Disordered regions lie at residues 82 to 201 (KNEK…SSSA) and 216 to 236 (RLKN…GSKK). The segment covering 87–102 (KAKRTRTGKRKTAAKR) has biased composition (basic residues). 2 stretches are compositionally biased toward polar residues: residues 108–118 (PSTSQPMSTTN) and 126–151 (GRST…AIQI). The segment covering 152–169 (SPTIASSSGQTSSRSSET) has biased composition (low complexity). Positions 170 to 201 (LQSIIQSPKTPKRPSSSILDPPVSSGTASSSA) are enriched in polar residues. The 198-residue stretch at 219–416 (NVPKEPSEEN…STTHSNMQVI (198 aa)) folds into the HIN-200 domain. Over residues 220-229 (VPKEPSEENG) the composition is skewed to basic and acidic residues.

The protein belongs to the HIN-200 family.

Its subcellular location is the nucleus. This is Pyrin and HIN domain-containing protein 1 from Mus musculus (Mouse).